The following is a 480-amino-acid chain: UDP-N-acetylmuramoyl-L-alanyl-D-glutamate--2,6-diaminopimelate ligase (480 aa).

Ser21 lines the UDP-N-acetyl-alpha-D-muramoyl-L-alanyl-D-glutamate pocket. Residue 98-104 participates in ATP binding; that stretch reads GTNGKSS. UDP-N-acetyl-alpha-D-muramoyl-L-alanyl-D-glutamate-binding positions include 144-145, Ser171, Gln177, and Arg179; that span reads TT. Position 211 is an N6-carboxylysine (Lys211). Meso-2,6-diaminopimelate is bound by residues Arg372, 396–399, Gly446, and Glu450; that span reads DNPR. The Meso-diaminopimelate recognition motif motif lies at 396–399; the sequence is DNPR.

This sequence belongs to the MurCDEF family. MurE subfamily. Requires Mg(2+) as cofactor. Carboxylation is probably crucial for Mg(2+) binding and, consequently, for the gamma-phosphate positioning of ATP.

It localises to the cytoplasm. The enzyme catalyses UDP-N-acetyl-alpha-D-muramoyl-L-alanyl-D-glutamate + meso-2,6-diaminopimelate + ATP = UDP-N-acetyl-alpha-D-muramoyl-L-alanyl-gamma-D-glutamyl-meso-2,6-diaminopimelate + ADP + phosphate + H(+). It functions in the pathway cell wall biogenesis; peptidoglycan biosynthesis. In terms of biological role, catalyzes the addition of meso-diaminopimelic acid to the nucleotide precursor UDP-N-acetylmuramoyl-L-alanyl-D-glutamate (UMAG) in the biosynthesis of bacterial cell-wall peptidoglycan. The sequence is that of UDP-N-acetylmuramoyl-L-alanyl-D-glutamate--2,6-diaminopimelate ligase from Rickettsia prowazekii (strain Madrid E).